Consider the following 405-residue polypeptide: L-rhamnonate dehydratase (405 aa).

Substrate is bound by residues His33 and Arg59. Positions 226, 252, and 280 each coordinate Mg(2+). His329 acts as the Proton acceptor in catalysis. Glu349 contributes to the substrate binding site.

This sequence belongs to the mandelate racemase/muconate lactonizing enzyme family. RhamD subfamily. As to quaternary structure, homooctamer; tetramer of dimers. It depends on Mg(2+) as a cofactor.

The enzyme catalyses L-rhamnonate = 2-dehydro-3-deoxy-L-rhamnonate + H2O. Functionally, catalyzes the dehydration of L-rhamnonate to 2-keto-3-deoxy-L-rhamnonate (KDR). The protein is L-rhamnonate dehydratase of Salmonella paratyphi C (strain RKS4594).